The chain runs to 1025 residues: Fanconi-associated nuclease 1 (1025 aa).

The segment at 40-68 adopts a UBZ4-type zinc-finger fold; that stretch reads KLACPICSKMVPRYDLNWHLDEKCANNDN. Zn(2+) contacts are provided by Cys43, Cys46, His58, and Cys63. Residues 98 to 120 are disordered; the sequence is TPGKLSPSKASLTPDPSDSAKMG. Ser182 bears the Phosphoserine mark. A coiled-coil region spans residues 682–704; that stretch reads VEILQRLHMYEEAVKELESLLSQ. Mn(2+) is bound by residues Glu842, Asp968, Glu983, and Val984. The VRR-NUC domain occupies 903–1015; it reads AESLRAWVAA…GADVEVCHVV (113 aa).

The protein belongs to the FAN1 family. In terms of assembly, interacts with FANCD2 (when monoubiquitinated). Interacts with FANCI, MLH1, MLH3 and PMS2. Mn(2+) serves as cofactor. Requires Mg(2+) as cofactor. In terms of processing, ubiquitinated and degraded during mitotic exit by the APC/C-Cdh1 complex.

It is found in the nucleus. It catalyses the reaction Hydrolytically removes 5'-nucleotides successively from the 3'-hydroxy termini of 3'-hydroxy-terminated oligonucleotides.. Its function is as follows. Nuclease required for the repair of DNA interstrand cross-links (ICL) recruited at sites of DNA damage by monoubiquitinated FANCD2. Specifically involved in repair of ICL-induced DNA breaks by being required for efficient homologous recombination, probably in the resolution of homologous recombination intermediates. Not involved in DNA double-strand breaks resection. Acts as a 5'-3' exonuclease that anchors at a cut end of DNA and cleaves DNA successively at every third nucleotide, allowing to excise an ICL from one strand through flanking incisions. Probably keeps excising with 3'-flap annealing until it reaches and unhooks the ICL. Acts at sites that have a 5'-terminal phosphate anchor at a nick or a 1- or 2-nucleotide flap and is augmented by a 3' flap. Also has endonuclease activity toward 5'-flaps. In Ailuropoda melanoleuca (Giant panda), this protein is Fanconi-associated nuclease 1 (FAN1).